The sequence spans 357 residues: Inner membrane protein YcfT (357 aa).

Residues 1–12 are Cytoplasmic-facing; the sequence is MKQKELWINQIK. A helical transmembrane segment spans residues 13–33; sequence GLCICLVVIYHSVITFYPHLT. Residues 34–49 are Periplasmic-facing; the sequence is TFQHPLSEVLSKCWIY. Residues 50–70 traverse the membrane as a helical segment; that stretch reads FNLYLAPFRMPVFFFISGYLI. The Cytoplasmic portion of the chain corresponds to 71 to 86; sequence RRYIDSVPWGNCLDKR. A helical transmembrane segment spans residues 87–107; that stretch reads IWNIFWVLALWGVVQWLALSA. The Periplasmic segment spans residues 108–135; that stretch reads LNQWLAPERDLSNASNAAYADSTGEFLH. The helical transmembrane segment at 136 to 156 threads the bilayer; the sequence is GMITASTSLWYLYALIVYFVV. The Cytoplasmic portion of the chain corresponds to 157–162; that stretch reads CKIFSR. A helical transmembrane segment spans residues 163 to 183; the sequence is LALPLFALFVLLSVAVNFVPT. Residues 184-196 are Periplasmic-facing; sequence PWWGMNSVIRNLP. A helical transmembrane segment spans residues 197–217; sequence YYSLGAWFGATIMTCVKEVPL. Residues 218–231 are Cytoplasmic-facing; it reads RRHLLMASLLTVLA. The chain crosses the membrane as a helical span at residues 232–252; the sequence is VGAWLFTISLLLSLVSIVVIM. At 253 to 310 the chain is on the periplasmic side; sequence KLFYQYEQRFGMRSTSLLNVIGSNTIAIYTTHRILVEIFSLTLLAQMNAARWSPQVEL. Residues 311-331 form a helical membrane-spanning segment; it reads TLLLVYPFVSLFICTVAGLLV. Over 332–357 the chain is Cytoplasmic; the sequence is RKLSQRAFSDLLFSPPSLPAAVSYSR.

Belongs to the acyltransferase 3 family.

It localises to the cell inner membrane. This Escherichia coli (strain K12) protein is Inner membrane protein YcfT (ycfT).